The chain runs to 168 residues: Ribosome maturation factor RimP (168 aa).

Belongs to the RimP family.

The protein localises to the cytoplasm. Its function is as follows. Required for maturation of 30S ribosomal subunits. The chain is Ribosome maturation factor RimP from Bordetella bronchiseptica (strain ATCC BAA-588 / NCTC 13252 / RB50) (Alcaligenes bronchisepticus).